Reading from the N-terminus, the 130-residue chain is Follitropin subunit beta (130 aa).

The first 20 residues, 1 to 20 (MMKSIQLCILLWCLRAVCCH), serve as a signal peptide directing secretion. Disulfide bonds link C22-C70, C36-C85, C39-C123, C47-C101, C51-C103, and C106-C113. N-linked (GlcNAc...) asparagine glycans are attached at residues N26 and N43.

It belongs to the glycoprotein hormones subunit beta family. As to quaternary structure, heterodimer. The active follitropin is a heterodimer composed of an alpha chain/CGA shared with other hormones and a unique beta chain/FSHB shown here.

The protein localises to the secreted. Together with the alpha chain CGA constitutes follitropin, the follicle-stimulating hormone, and provides its biological specificity to the hormone heterodimer. Binds FSHR, a G protein-coupled receptor, on target cells to activate downstream signaling pathways. Follitropin is involved in follicle development and spermatogenesis in reproductive organs. The sequence is that of Follitropin subunit beta (Fshb) from Rattus norvegicus (Rat).